A 779-amino-acid chain; its full sequence is Mesenchyme-specific cell surface glycoprotein (779 aa).

Residues 1–15 form the signal peptide; sequence MQFGVPLLVLCLALG. Residues asparagine 203 and asparagine 234 are each glycosylated (N-linked (GlcNAc...) asparagine). The tract at residues 249-363 is disordered; the sequence is AGFPRGTTWS…QYPMIPTTPL (115 aa). Gly residues predominate over residues 262 to 351; sequence GAGGQGGQGQ…GGQGGQGGGN (90 aa). Asparagine 369, asparagine 451, and asparagine 609 each carry an N-linked (GlcNAc...) asparagine glycan.

As to expression, restricted to the primary mesenchyme cell lineage.

The protein localises to the cell membrane. Functionally, not known. Could be involved in mesenchyme cell migration, adhesion, fusion, or spicule formation. In Strongylocentrotus purpuratus (Purple sea urchin), this protein is Mesenchyme-specific cell surface glycoprotein.